A 327-amino-acid polypeptide reads, in one-letter code: Pantothenate kinase (327 aa).

105–112 (GSVAVGKS) provides a ligand contact to ATP.

It belongs to the prokaryotic pantothenate kinase family.

The protein localises to the cytoplasm. The enzyme catalyses (R)-pantothenate + ATP = (R)-4'-phosphopantothenate + ADP + H(+). It participates in cofactor biosynthesis; coenzyme A biosynthesis; CoA from (R)-pantothenate: step 1/5. This chain is Pantothenate kinase, found in Cutibacterium acnes (strain DSM 16379 / KPA171202) (Propionibacterium acnes).